The sequence spans 322 residues: MSKPIKIEQGIKYRDADKMALIPVRNVAEEAPKEVLRKPAWMKIKLPSDSKRIQEIKSALRKNKLHSVCEEASCPNLAECFNHGTATFMILGAICTRRCPFCDVAHGRPLPPNAEEPSHLAQTIADMKLKYVVITSVDRDDLRDGGAQHFVDCIREIREKSPEIHIETLVPDFRGRMDRALDILQGTPPNVFNHNLETAPRLYRKARPGANYQWSLDLLKNFKEIHPEVPTKSGVMMGLGETKEEIIQVLKDLRAHGVTMLTLGQYLAPSRHHLPVERYVPPAEFDELKEIALELGFTHAACGPFVRSSYHADLQAQGLEIK.

Cysteine 69, cysteine 74, cysteine 80, cysteine 95, cysteine 99, cysteine 102, and serine 309 together coordinate [4Fe-4S] cluster. Residues 81–298 (FNHGTATFMI…KEIALELGFT (218 aa)) enclose the Radical SAM core domain.

The protein belongs to the radical SAM superfamily. Lipoyl synthase family. [4Fe-4S] cluster is required as a cofactor.

The protein resides in the cytoplasm. The enzyme catalyses [[Fe-S] cluster scaffold protein carrying a second [4Fe-4S](2+) cluster] + N(6)-octanoyl-L-lysyl-[protein] + 2 oxidized [2Fe-2S]-[ferredoxin] + 2 S-adenosyl-L-methionine + 4 H(+) = [[Fe-S] cluster scaffold protein] + N(6)-[(R)-dihydrolipoyl]-L-lysyl-[protein] + 4 Fe(3+) + 2 hydrogen sulfide + 2 5'-deoxyadenosine + 2 L-methionine + 2 reduced [2Fe-2S]-[ferredoxin]. It functions in the pathway protein modification; protein lipoylation via endogenous pathway; protein N(6)-(lipoyl)lysine from octanoyl-[acyl-carrier-protein]: step 2/2. Catalyzes the radical-mediated insertion of two sulfur atoms into the C-6 and C-8 positions of the octanoyl moiety bound to the lipoyl domains of lipoate-dependent enzymes, thereby converting the octanoylated domains into lipoylated derivatives. In Photobacterium profundum (strain SS9), this protein is Lipoyl synthase.